Reading from the N-terminus, the 196-residue chain is Ribonuclease HII (196 aa).

Residues 9-196 (GLVCGIDEAG…GPVARQLSLL (188 aa)) form the RNase H type-2 domain. Residues Asp-15, Glu-16, and Asp-107 each coordinate a divalent metal cation.

This sequence belongs to the RNase HII family. Requires Mn(2+) as cofactor. Mg(2+) is required as a cofactor.

The protein resides in the cytoplasm. The catalysed reaction is Endonucleolytic cleavage to 5'-phosphomonoester.. Functionally, endonuclease that specifically degrades the RNA of RNA-DNA hybrids. This is Ribonuclease HII from Dechloromonas aromatica (strain RCB).